The sequence spans 148 residues: Deoxyuridine 5'-triphosphate nucleotidohydrolase (148 aa).

Substrate contacts are provided by residues 68–70 (RSG), N81, 85–87 (TID), and K95.

The protein belongs to the dUTPase family. Mg(2+) serves as cofactor.

It carries out the reaction dUTP + H2O = dUMP + diphosphate + H(+). It functions in the pathway pyrimidine metabolism; dUMP biosynthesis; dUMP from dCTP (dUTP route): step 2/2. This enzyme is involved in nucleotide metabolism: it produces dUMP, the immediate precursor of thymidine nucleotides and it decreases the intracellular concentration of dUTP so that uracil cannot be incorporated into DNA. This Thermoanaerobacter sp. (strain X514) protein is Deoxyuridine 5'-triphosphate nucleotidohydrolase.